Consider the following 159-residue polypeptide: Trafficking protein particle complex subunit 6A (159 aa).

S33 is modified (phosphoserine).

The protein belongs to the TRAPP small subunits family. BET3 subfamily. In terms of assembly, part of the multisubunit transport protein particle (TRAPP) complex. Heterodimer with TRAPPC3. The heterodimer TRAPPC3-TRAPPC6A interacts with TRAPPC2L. Interacts with TRAPPC2L. In terms of tissue distribution, ubiquitous, with lowest expression in skeletal muscle and brain and highest in kidney, liver and testis, as well as in cultured melanocytes.

It localises to the golgi apparatus. It is found in the cis-Golgi network. The protein resides in the endoplasmic reticulum. Functionally, may play a role in vesicular transport during the biogenesis of melanosomes. The polypeptide is Trafficking protein particle complex subunit 6A (Mus musculus (Mouse)).